A 908-amino-acid polypeptide reads, in one-letter code: Protein translocase subunit SecA (908 aa).

ATP-binding positions include Gln87, 105-109 (GEGKT), and Asp512. The disordered stretch occupies residues 876–908 (QAPMIRDGEKVGRNDPCPCGSGRKYKQCHGKLS). Residues Cys892, Cys894, Cys903, and His904 each coordinate Zn(2+). Over residues 898-908 (RKYKQCHGKLS) the composition is skewed to basic residues.

The protein belongs to the SecA family. In terms of assembly, monomer and homodimer. Part of the essential Sec protein translocation apparatus which comprises SecA, SecYEG and auxiliary proteins SecDF-YajC and YidC. The cofactor is Zn(2+).

The protein resides in the cell inner membrane. It is found in the cytoplasm. It carries out the reaction ATP + H2O + cellular proteinSide 1 = ADP + phosphate + cellular proteinSide 2.. Part of the Sec protein translocase complex. Interacts with the SecYEG preprotein conducting channel. Has a central role in coupling the hydrolysis of ATP to the transfer of proteins into and across the cell membrane, serving both as a receptor for the preprotein-SecB complex and as an ATP-driven molecular motor driving the stepwise translocation of polypeptide chains across the membrane. This chain is Protein translocase subunit SecA, found in Shewanella baltica (strain OS185).